The sequence spans 234 residues: 1-(5-phosphoribosyl)-5-[(5-phosphoribosylamino)methylideneamino] imidazole-4-carboxamide isomerase (234 aa).

The active-site Proton acceptor is the Asp9. The active-site Proton donor is Asp131.

It belongs to the HisA/HisF family.

The protein resides in the cytoplasm. The catalysed reaction is 1-(5-phospho-beta-D-ribosyl)-5-[(5-phospho-beta-D-ribosylamino)methylideneamino]imidazole-4-carboxamide = 5-[(5-phospho-1-deoxy-D-ribulos-1-ylimino)methylamino]-1-(5-phospho-beta-D-ribosyl)imidazole-4-carboxamide. The protein operates within amino-acid biosynthesis; L-histidine biosynthesis; L-histidine from 5-phospho-alpha-D-ribose 1-diphosphate: step 4/9. The sequence is that of 1-(5-phosphoribosyl)-5-[(5-phosphoribosylamino)methylideneamino] imidazole-4-carboxamide isomerase from Staphylococcus epidermidis (strain ATCC 35984 / DSM 28319 / BCRC 17069 / CCUG 31568 / BM 3577 / RP62A).